We begin with the raw amino-acid sequence, 440 residues long: Tol-Pal system protein TolB (440 aa).

Residues 1-28 form the signal peptide; the sequence is MVMTRRIFFSWFIVICSLWLSSFSSVHA. A disordered region spans residues 417 to 440; the sequence is RNERQLPTPNDASDPAWSPLLNMQ.

The protein belongs to the TolB family. The Tol-Pal system is composed of five core proteins: the inner membrane proteins TolA, TolQ and TolR, the periplasmic protein TolB and the outer membrane protein Pal. They form a network linking the inner and outer membranes and the peptidoglycan layer.

It is found in the periplasm. Functionally, part of the Tol-Pal system, which plays a role in outer membrane invagination during cell division and is important for maintaining outer membrane integrity. This chain is Tol-Pal system protein TolB, found in Bartonella quintana (strain Toulouse) (Rochalimaea quintana).